The primary structure comprises 289 residues: Thymidylate synthase (289 aa).

DUMP contacts are provided by residues R26 and 151–152 (RR). The active-site Nucleophile is C171. DUMP-binding positions include 191-194 (RSGD), N202, and 232-234 (HVY). D194 contributes to the (6R)-5,10-methylene-5,6,7,8-tetrahydrofolate binding site. Position 288 (A288) interacts with (6R)-5,10-methylene-5,6,7,8-tetrahydrofolate.

The protein belongs to the thymidylate synthase family. As to quaternary structure, homodimer.

It catalyses the reaction dUMP + (6R)-5,10-methylene-5,6,7,8-tetrahydrofolate = 7,8-dihydrofolate + dTMP. The protein operates within pyrimidine metabolism; dTTP biosynthesis. This is Thymidylate synthase from Equus caballus (Horse).